A 139-amino-acid polypeptide reads, in one-letter code: Class I hydrophobin 1 (139 aa).

Residues 1–21 form the signal peptide; that stretch reads MFFRISTVFVVALAAFAAASP. Disulfide bonds link Cys-57–Cys-118, Cys-64–Cys-112, Cys-65–Cys-98, and Cys-119–Cys-132.

The protein belongs to the fungal hydrophobin family. Self-assembles to form functional amyloid fibrils called rodlets. Self-assembly into fibrillar rodlets occurs spontaneously at hydrophobic:hydrophilic interfaces and the rodlets further associate laterally to form amphipathic monolayers.

It localises to the secreted. The protein localises to the cell wall. Its function is as follows. Aerial growth, conidiation, and dispersal of filamentous fungi in the environment rely upon a capability of their secreting small amphipathic proteins called hydrophobins (HPBs) with low sequence identity. Class I can self-assemble into an outermost layer of rodlet bundles on aerial cell surfaces, conferring cellular hydrophobicity that supports fungal growth, development and dispersal; whereas Class II form highly ordered films at water-air interfaces through intermolecular interactions but contribute nothing to the rodlet structure. Hah1 is a class I hydrophobin that is involved in aerial growth of mycelia, but does not play a role in pathogenesis. The sequence is that of Class I hydrophobin 1 from Heterobasidion annosum (Root rot fungus).